A 104-amino-acid polypeptide reads, in one-letter code: Guanyl-specific ribonuclease Ap1 (104 aa).

Intrachain disulfides connect C2/C10 and C6/C103. H40 is an active-site residue. The Proton acceptor role is filled by E58. H92 functions as the Proton donor in the catalytic mechanism.

The protein belongs to the ribonuclease N1/T1 family.

Its subcellular location is the secreted. It carries out the reaction [RNA] containing guanosine + H2O = an [RNA fragment]-3'-guanosine-3'-phosphate + a 5'-hydroxy-ribonucleotide-3'-[RNA fragment].. The protein is Guanyl-specific ribonuclease Ap1 of Aspergillus pallidus.